The sequence spans 1197 residues: PAN2-PAN3 deadenylation complex catalytic subunit PAN2 (1197 aa).

4 WD repeats span residues 153 to 193 (DEAE…QKYT), 195 to 231 (EVPG…VEHE), 244 to 280 (VHGN…ATTP), and 328 to 367 (TVGP…TFNT). The tract at residues 368 to 485 (YSRETDFALP…IGREEEPHLY (118 aa)) is linker. The USP domain occupies 486–919 (MVAKKYRKVT…VPAILYYARR (434 aa)). The region spanning 970–1142 (VGLDAEFVTL…EDARTALQLY (173 aa)) is the Exonuclease domain. 4 residues coordinate a divalent metal cation: Asp973, Glu975, Asp1082, and Asp1134. The interval 1176 to 1197 (VPEPDSQSSPKHGAVFPPVLAL) is disordered.

This sequence belongs to the peptidase C19 family. PAN2 subfamily. In terms of assembly, forms a heterotrimer with an asymmetric homodimer of the regulatory subunit PAN3 to form the poly(A)-nuclease (PAN) deadenylation complex. It depends on a divalent metal cation as a cofactor.

It localises to the cytoplasm. The protein localises to the P-body. Its subcellular location is the nucleus. The enzyme catalyses Exonucleolytic cleavage of poly(A) to 5'-AMP.. Positively regulated by the regulatory subunit PAN3. Functionally, catalytic subunit of the poly(A)-nuclease (PAN) deadenylation complex, one of two cytoplasmic mRNA deadenylases involved in general and miRNA-mediated mRNA turnover. PAN specifically shortens poly(A) tails of RNA and the activity is stimulated by poly(A)-binding protein (PABP). PAN deadenylation is followed by rapid degradation of the shortened mRNA tails by the CCR4-NOT complex. Deadenylated mRNAs are then degraded by two alternative mechanisms, namely exosome-mediated 3'-5' exonucleolytic degradation, or deadenylation-dependent mRNA decaping and subsequent 5'-3' exonucleolytic degradation by XRN1. The chain is PAN2-PAN3 deadenylation complex catalytic subunit PAN2 from Gallus gallus (Chicken).